The primary structure comprises 309 residues: Sulfur oxygenase/reductase (309 aa).

Cysteine 31 carries the cysteine persulfide modification. Histidine 86, histidine 90, and glutamate 114 together coordinate Fe cation.

Homoicosatetramer. The resulting structure is a hollow sphere where catalysis takes place in the inside cavity. Fe cation serves as cofactor.

The protein localises to the cytoplasm. It catalyses the reaction 4 sulfur + O2 + 4 H2O = 2 hydrogen sulfide + 2 sulfite + 6 H(+). With respect to regulation, inhibited by zinc. Its function is as follows. Catalyzes the simultaneous oxidation and reduction of elemental sulfur in the presence of oxygen, with sulfite and hydrogen sulfide as products. The polypeptide is Sulfur oxygenase/reductase (sor) (Acidianus ambivalens (Desulfurolobus ambivalens)).